A 420-amino-acid polypeptide reads, in one-letter code: 4-hydroxy-3-methylbut-2-en-1-yl diphosphate synthase (flavodoxin) (420 aa).

Cys-307, Cys-310, Cys-353, and Glu-360 together coordinate [4Fe-4S] cluster.

This sequence belongs to the IspG family. Requires [4Fe-4S] cluster as cofactor.

The catalysed reaction is (2E)-4-hydroxy-3-methylbut-2-enyl diphosphate + oxidized [flavodoxin] + H2O + 2 H(+) = 2-C-methyl-D-erythritol 2,4-cyclic diphosphate + reduced [flavodoxin]. It participates in isoprenoid biosynthesis; isopentenyl diphosphate biosynthesis via DXP pathway; isopentenyl diphosphate from 1-deoxy-D-xylulose 5-phosphate: step 5/6. Functionally, converts 2C-methyl-D-erythritol 2,4-cyclodiphosphate (ME-2,4cPP) into 1-hydroxy-2-methyl-2-(E)-butenyl 4-diphosphate. In Brucella abortus (strain S19), this protein is 4-hydroxy-3-methylbut-2-en-1-yl diphosphate synthase (flavodoxin).